The following is a 343-amino-acid chain: Lipase chaperone (343 aa).

A helical transmembrane segment spans residues I7–K27.

This sequence belongs to the lipase chaperone family.

It localises to the cell inner membrane. In terms of biological role, may be involved in the folding of the extracellular lipase during its passage through the periplasm. The sequence is that of Lipase chaperone (lifO) from Acinetobacter baylyi (strain ATCC 33305 / BD413 / ADP1).